Consider the following 515-residue polypeptide: G-protein coupled receptor 176 (515 aa).

Residues 1-41 (MGHNSSWVSPNTSHPRNTSGAEAGANLSAFGELSEAQLYRQ) are Extracellular-facing. 4 N-linked (GlcNAc...) asparagine glycosylation sites follow: N4, N11, N17, and N26. The helical transmembrane segment at 42–64 (FTTTVQVVIFIGSLLGNFMVLWS) threads the bilayer. The Cytoplasmic portion of the chain corresponds to 65 to 77 (TCRTTVFKSVTNR). The chain crosses the membrane as a helical span at residues 78–98 (FIKNLACSGICASVVCVPFDI). The Extracellular portion of the chain corresponds to 99-108 (ILSSSPHCCW). The helical transmembrane segment at 109-129 (WIYTMLFCKVLKFLHKVFCSV) threads the bilayer. Topologically, residues 130 to 157 (TVLSFPAIALDRYYSVLYPLERKISDAK) are cytoplasmic. The chain crosses the membrane as a helical span at residues 158–177 (SRELVMYIWAHAVVASVPVF). Topologically, residues 178 to 204 (AVTNVADIYAMSTCTEVWSNSLGHLVY) are extracellular. A helical membrane pass occupies residues 205–225 (VLIYNVTTVIVPVAVVFLFLI). The Cytoplasmic portion of the chain corresponds to 226-264 (LIRRALSASQKKKVIIAALRTPQNTISIPYASQREAELH). The helical transmembrane segment at 265–285 (ATLLSMVTVFILCSVPYATLV) threads the bilayer. At 286–301 (VYQTVLNVPNTSVFLL) the chain is on the extracellular side. A helical transmembrane segment spans residues 302-322 (LTAIWLPKVSLLANPVLFLTV). Residues 323–515 (NKSVRKCLVG…KVSIFPKVDS (193 aa)) lie on the Cytoplasmic side of the membrane. Positions 407 to 435 (SCPEGEQEPPQLAPSVPPPGTVDSEPRVS) are disordered. Over residues 417-426 (QLAPSVPPPG) the composition is skewed to pro residues.

This sequence belongs to the G-protein coupled receptor 1 family. In terms of tissue distribution, expressed mainly in the brain, with prominent expression in the SCN (at protein level).

Its subcellular location is the cell membrane. Functionally, orphan receptor involved in normal circadian rhythm behavior. Acts through the G-protein subclass G(z)-alpha and has an agonist-independent basal activity to repress cAMP production. In Mus musculus (Mouse), this protein is G-protein coupled receptor 176 (Gpr176).